The chain runs to 79 residues: MDNIEQRVKKIVAEQLGVAEGDIKNESSFVNDLGADSLDTIELVMALEDEFGIEIPDEEAEKITTVQLAIDFAKSKAQG.

Positions 2–77 (DNIEQRVKKI…LAIDFAKSKA (76 aa)) constitute a Carrier domain. The residue at position 37 (Ser37) is an O-(pantetheine 4'-phosphoryl)serine.

This sequence belongs to the acyl carrier protein (ACP) family. 4'-phosphopantetheine is transferred from CoA to a specific serine of apo-ACP by AcpS. This modification is essential for activity because fatty acids are bound in thioester linkage to the sulfhydryl of the prosthetic group.

Its subcellular location is the cytoplasm. It participates in lipid metabolism; fatty acid biosynthesis. In terms of biological role, carrier of the growing fatty acid chain in fatty acid biosynthesis. This is Acyl carrier protein from Polynucleobacter necessarius subsp. necessarius (strain STIR1).